A 512-amino-acid chain; its full sequence is Perphorin-1 (512 aa).

The first 18 residues, 1-18 (MMRKALLALCVATAFAVA), serve as a signal peptide directing secretion. Residues N49, N96, N118, N378, N381, N403, and N476 are each glycosylated (N-linked (GlcNAc...) asparagine).

It is found in the secreted. The protein localises to the extracellular space. Its subcellular location is the extracellular matrix. In terms of biological role, may be involved in conversion of asexual males and females to the sexual pathway. The chain is Perphorin-1 from Volvox carteri (Green alga).